We begin with the raw amino-acid sequence, 216 residues long: Ras-related protein Rab-5C (216 aa).

Positions 30, 31, 33, 34, 35, 36, 47, 48, 53, and 79 each coordinate GTP. Position 35 (serine 35) interacts with Mg(2+). Short sequence motifs (switch) lie at residues 45–57 (QFHEYQESTIGAA) and 78–94 (AGQERYHSLAPMYYRGA). Residue threonine 53 coordinates Mg(2+). Serine 85 carries the phosphoserine; by LRRK2 modification. GTP contacts are provided by asparagine 134, lysine 135, aspartate 137, alanine 165, and lysine 166. The disordered stretch occupies residues 185–216 (NEPQNATGAPGRNRGVDLQENNPASRSQCCSN). Residues 203-216 (QENNPASRSQCCSN) show a composition bias toward polar residues. 2 S-geranylgeranyl cysteine lipidation sites follow: cysteine 213 and cysteine 214.

It belongs to the small GTPase superfamily. Rab family. Interacts with EEA1. Interacts with INCA1. Interacts with GDI1, GDI2, CHML and CHM; phosphorylation at Ser-85 disrupts this interaction. The cofactor is Mg(2+). Phosphorylation of Ser-85 in the switch II region by LRRK2 prevents the association of RAB regulatory proteins, including CHM, CHML and RAB GDP dissociation inhibitors GDI1 and GDI2. Post-translationally, (Microbial infection) Glycosylated on arginine residues by S.typhimurium protein Ssek3.

It localises to the cell membrane. Its subcellular location is the early endosome membrane. The protein resides in the melanosome. It catalyses the reaction GTP + H2O = GDP + phosphate + H(+). Its activity is regulated as follows. Regulated by guanine nucleotide exchange factors (GEFs) which promote the exchange of bound GDP for free GTP. Regulated by GTPase activating proteins (GAPs) which increase the GTP hydrolysis activity. Inhibited by GDP dissociation inhibitors (GDIs). In terms of biological role, the small GTPases Rab are key regulators of intracellular membrane trafficking, from the formation of transport vesicles to their fusion with membranes. Rabs cycle between an inactive GDP-bound form and an active GTP-bound form that is able to recruit to membranes different sets of downstream effectors directly responsible for vesicle formation, movement, tethering and fusion. This Homo sapiens (Human) protein is Ras-related protein Rab-5C.